The primary structure comprises 546 residues: Peroxisomal OPC-8:0-CoA ligase 1 (546 aa).

Positions 197, 198, 199, 200, 201, and 205 each coordinate ATP. CoA is bound at residue Lys-265. The tract at residues Glu-267–Gln-338 is SBD1. Positions 338, 339, 343, 424, and 439 each coordinate ATP. The interval Gly-339–Tyr-403 is SBD2. Lys-447 and Gly-448 together coordinate CoA. Lys-530 contacts ATP. The Microbody targeting signal motif lies at Ser-544–Leu-546.

The protein belongs to the ATP-dependent AMP-binding enzyme family. Mg(2+) serves as cofactor. As to expression, expressed at low levels in seedlings, cotyledons, leaves, hypocotyls and roots.

The protein localises to the peroxisome. The catalysed reaction is (9S,13S,15Z)-12-oxophyto-10,15-dienoate + ATP + CoA = (10Z,15Z)-12-oxophytodienoyl-CoA + AMP + diphosphate. It carries out the reaction (1S,2S)-OPC-8 + ATP + CoA = OPC8-CoA + AMP + diphosphate. The enzyme catalyses hexadecanoate + ATP + CoA = hexadecanoyl-CoA + AMP + diphosphate. It catalyses the reaction (9Z)-octadecenoate + ATP + CoA = (9Z)-octadecenoyl-CoA + AMP + diphosphate. The catalysed reaction is tetradecanoate + ATP + CoA = tetradecanoyl-CoA + AMP + diphosphate. It carries out the reaction decanoate + ATP + CoA = decanoyl-CoA + AMP + diphosphate. The enzyme catalyses dodecanoate + ATP + CoA = dodecanoyl-CoA + AMP + diphosphate. It catalyses the reaction octadecanoate + ATP + CoA = octadecanoyl-CoA + AMP + diphosphate. The catalysed reaction is OPC-6 + ATP + CoA = OPC-6-CoA + AMP + diphosphate. It carries out the reaction dinor-OPDA + ATP + CoA = dinor-OPDA-CoA + AMP + diphosphate. In terms of biological role, contributes to jasmonic acid biosynthesis by initiating the beta-oxidative chain shortening of its precursors. Converts 12-oxo-phytodienoic acid (OPDA) and 3-oxo-2-(2'-pentenyl)-cyclopentane-1-octanoic acid (OPC-8:0) into OPDA-CoA and OPC-8:0-CoA, respectively. Follows a two-step reaction mechanism, wherein the carboxylate substrate first undergoes adenylation by ATP, followed by a thioesterification in the presence of CoA to yield the final CoA thioester. The sequence is that of Peroxisomal OPC-8:0-CoA ligase 1 from Arabidopsis thaliana (Mouse-ear cress).